The chain runs to 148 residues: tRNA-specific adenosine deaminase (148 aa).

In terms of domain architecture, CMP/dCMP-type deaminase spans 1 to 116; it reads MEQALKQARL…SNLRYFNSSA (116 aa). Position 48 (His-48) interacts with Zn(2+). Glu-50 acts as the Proton donor in catalysis. Zn(2+)-binding residues include Cys-78 and Cys-81.

This sequence belongs to the cytidine and deoxycytidylate deaminase family. Homodimer. Zn(2+) is required as a cofactor.

The catalysed reaction is adenosine(34) in tRNA + H2O + H(+) = inosine(34) in tRNA + NH4(+). In terms of biological role, catalyzes the deamination of adenosine to inosine at the wobble position 34 of tRNA(Arg2). This chain is tRNA-specific adenosine deaminase, found in Rickettsia typhi (strain ATCC VR-144 / Wilmington).